The chain runs to 131 residues: Fluoride-specific ion channel FluC 1 (131 aa).

Transmembrane regions (helical) follow at residues 38 to 58, 69 to 89, and 108 to 128; these read FPLS…IAMM, TVMM…TALN, and IATV…ALLA. 2 residues coordinate Na(+): Gly79 and Ser82.

This sequence belongs to the fluoride channel Fluc/FEX (TC 1.A.43) family.

The protein localises to the cell membrane. It catalyses the reaction fluoride(in) = fluoride(out). Na(+) is not transported, but it plays an essential structural role and its presence is essential for fluoride channel function. In terms of biological role, fluoride-specific ion channel. Important for reducing fluoride concentration in the cell, thus reducing its toxicity. This chain is Fluoride-specific ion channel FluC 1, found in Bifidobacterium longum (strain NCC 2705).